A 241-amino-acid polypeptide reads, in one-letter code: Ubiquinone biosynthesis O-methyltransferase (241 aa).

The S-adenosyl-L-methionine site is built by R44, G63, D84, and M128.

This sequence belongs to the methyltransferase superfamily. UbiG/COQ3 family.

The enzyme catalyses a 3-demethylubiquinol + S-adenosyl-L-methionine = a ubiquinol + S-adenosyl-L-homocysteine + H(+). It carries out the reaction a 3-(all-trans-polyprenyl)benzene-1,2-diol + S-adenosyl-L-methionine = a 2-methoxy-6-(all-trans-polyprenyl)phenol + S-adenosyl-L-homocysteine + H(+). It participates in cofactor biosynthesis; ubiquinone biosynthesis. Its function is as follows. O-methyltransferase that catalyzes the 2 O-methylation steps in the ubiquinone biosynthetic pathway. In Hydrogenovibrio crunogenus (strain DSM 25203 / XCL-2) (Thiomicrospira crunogena), this protein is Ubiquinone biosynthesis O-methyltransferase.